A 180-amino-acid polypeptide reads, in one-letter code: Large ribosomal subunit protein uL5 (180 aa).

This sequence belongs to the universal ribosomal protein uL5 family. As to quaternary structure, part of the 50S ribosomal subunit; part of the 5S rRNA/L5/L18/L25 subcomplex. Contacts the 5S rRNA and the P site tRNA. Forms a bridge to the 30S subunit in the 70S ribosome.

Functionally, this is one of the proteins that bind and probably mediate the attachment of the 5S RNA into the large ribosomal subunit, where it forms part of the central protuberance. In the 70S ribosome it contacts protein S13 of the 30S subunit (bridge B1b), connecting the 2 subunits; this bridge is implicated in subunit movement. Contacts the P site tRNA; the 5S rRNA and some of its associated proteins might help stabilize positioning of ribosome-bound tRNAs. The chain is Large ribosomal subunit protein uL5 from Lactiplantibacillus plantarum (strain ATCC BAA-793 / NCIMB 8826 / WCFS1) (Lactobacillus plantarum).